The primary structure comprises 337 residues: Adenosine deaminase (337 aa).

Residues His12 and His14 each coordinate Zn(2+). Substrate contacts are provided by His14, Asp16, and Gly170. His197 contributes to the Zn(2+) binding site. Catalysis depends on Glu200, which acts as the Proton donor. Asp278 provides a ligand contact to Zn(2+). Asp279 serves as a coordination point for substrate.

It belongs to the metallo-dependent hydrolases superfamily. Adenosine and AMP deaminases family. Adenosine deaminase subfamily. Zn(2+) serves as cofactor.

It catalyses the reaction adenosine + H2O + H(+) = inosine + NH4(+). It carries out the reaction 2'-deoxyadenosine + H2O + H(+) = 2'-deoxyinosine + NH4(+). In terms of biological role, catalyzes the hydrolytic deamination of adenosine and 2-deoxyadenosine. The chain is Adenosine deaminase from Pectobacterium atrosepticum (strain SCRI 1043 / ATCC BAA-672) (Erwinia carotovora subsp. atroseptica).